A 359-amino-acid polypeptide reads, in one-letter code: Peptide chain release factor 1 (359 aa).

Position 235 is an N5-methylglutamine (Gln-235). Over residues 282 to 307 the composition is skewed to basic and acidic residues; sequence RQRADSERSADRKSQVGSGDRSERIR. Positions 282–309 are disordered; that stretch reads RQRADSERSADRKSQVGSGDRSERIRTY.

It belongs to the prokaryotic/mitochondrial release factor family. In terms of processing, methylated by PrmC. Methylation increases the termination efficiency of RF1.

The protein localises to the cytoplasm. Functionally, peptide chain release factor 1 directs the termination of translation in response to the peptide chain termination codons UAG and UAA. This Allorhizobium ampelinum (strain ATCC BAA-846 / DSM 112012 / S4) (Agrobacterium vitis (strain S4)) protein is Peptide chain release factor 1.